Here is a 637-residue protein sequence, read N- to C-terminus: ATP-dependent zinc metalloprotease FtsH (637 aa).

The Cytoplasmic portion of the chain corresponds to 1–6 (MNNQGR). Residues 7 to 27 (SILAWAALFIFVILLFNVFQS) form a helical membrane-spanning segment. At 28–103 (DGLLGVRNNI…VVPLETRMNT (76 aa)) the chain is on the periplasmic side. Residues 104 to 124 (FLGFLISWFPMLLLIGVWVFF) traverse the membrane as a helical segment. The Cytoplasmic segment spans residues 125–637 (MRQMHGGGKA…TKAQKENIAS (513 aa)). 195 to 202 (GPPGTGKT) lines the ATP pocket. H417 contacts Zn(2+). E418 is an active-site residue. H421 and D495 together coordinate Zn(2+). The tract at residues 617–637 (DKEKLHEKTKTTKAQKENIAS) is disordered.

In the central section; belongs to the AAA ATPase family. It in the C-terminal section; belongs to the peptidase M41 family. In terms of assembly, homohexamer. Zn(2+) serves as cofactor.

It localises to the cell inner membrane. In terms of biological role, acts as a processive, ATP-dependent zinc metallopeptidase for both cytoplasmic and membrane proteins. Plays a role in the quality control of integral membrane proteins. In Rickettsia typhi (strain ATCC VR-144 / Wilmington), this protein is ATP-dependent zinc metalloprotease FtsH.